The following is a 124-amino-acid chain: Large ribosomal subunit protein bL12 (124 aa).

Belongs to the bacterial ribosomal protein bL12 family. As to quaternary structure, homodimer. Part of the ribosomal stalk of the 50S ribosomal subunit. Forms a multimeric L10(L12)X complex, where L10 forms an elongated spine to which 2 to 4 L12 dimers bind in a sequential fashion. Binds GTP-bound translation factors.

Functionally, forms part of the ribosomal stalk which helps the ribosome interact with GTP-bound translation factors. Is thus essential for accurate translation. The polypeptide is Large ribosomal subunit protein bL12 (Idiomarina loihiensis (strain ATCC BAA-735 / DSM 15497 / L2-TR)).